The primary structure comprises 161 residues: Glycine cleavage system H protein 2 (161 aa).

One can recognise a Lipoyl-binding domain in the interval 34–116 (TVTVGVTDIG…YGEGWIAKLK (83 aa)). Residue K75 is modified to N6-lipoyllysine.

This sequence belongs to the GcvH family. As to quaternary structure, the glycine cleavage system is composed of four proteins: P, T, L and H. (R)-lipoate is required as a cofactor.

Its function is as follows. The glycine cleavage system catalyzes the degradation of glycine. The H protein shuttles the methylamine group of glycine from the P protein to the T protein. This chain is Glycine cleavage system H protein 2, found in Aquifex aeolicus (strain VF5).